Reading from the N-terminus, the 87-residue chain is Small ribosomal subunit protein bS20 (87 aa).

Belongs to the bacterial ribosomal protein bS20 family.

Functionally, binds directly to 16S ribosomal RNA. The protein is Small ribosomal subunit protein bS20 of Alkaliphilus oremlandii (strain OhILAs) (Clostridium oremlandii (strain OhILAs)).